The sequence spans 492 residues: Serine carboxypeptidase-like 31 (492 aa).

Residues 1–30 (MDNYQTKNISNLLTSLCFTTLLILAPVVIC) form the signal peptide. 3 disulfide bridges follow: Cys-105–Cys-376, Cys-270–Cys-283, and Cys-307–Cys-344. A glycan (N-linked (GlcNAc...) asparagine) is linked at Asn-156. Ser-198 is a catalytic residue. Asn-221 and Asn-271 each carry an N-linked (GlcNAc...) asparagine glycan. Asn-372 and Asn-383 each carry an N-linked (GlcNAc...) asparagine glycan. Catalysis depends on residues Asp-413 and His-465.

It belongs to the peptidase S10 family. In terms of tissue distribution, expressed in roots, senescent leaves, stems, flowers and siliques.

It is found in the secreted. Its function is as follows. Probable carboxypeptidase. This is Serine carboxypeptidase-like 31 (SCPL31) from Arabidopsis thaliana (Mouse-ear cress).